Reading from the N-terminus, the 249-residue chain is 3-deoxy-manno-octulosonate cytidylyltransferase (249 aa).

Belongs to the KdsB family.

It localises to the cytoplasm. The catalysed reaction is 3-deoxy-alpha-D-manno-oct-2-ulosonate + CTP = CMP-3-deoxy-beta-D-manno-octulosonate + diphosphate. It functions in the pathway nucleotide-sugar biosynthesis; CMP-3-deoxy-D-manno-octulosonate biosynthesis; CMP-3-deoxy-D-manno-octulosonate from 3-deoxy-D-manno-octulosonate and CTP: step 1/1. Its pathway is bacterial outer membrane biogenesis; lipopolysaccharide biosynthesis. Functionally, activates KDO (a required 8-carbon sugar) for incorporation into bacterial lipopolysaccharide in Gram-negative bacteria. This chain is 3-deoxy-manno-octulosonate cytidylyltransferase, found in Coxiella burnetii (strain CbuG_Q212) (Coxiella burnetii (strain Q212)).